Here is a 93-residue protein sequence, read N- to C-terminus: Protein BOLA2 (93 aa).

Cys-29 carries the S-glutathionyl cysteine; transient; alternate modification. The tract at residues 72–93 (KAQTPQQWKPPSQDSATLTKDA) is disordered.

Belongs to the bolA/yrbA family. Homodimer. Interacts in vitro with GRXS14, GRXS15, GRXS16 and GRXS17, but not with GRXC5. Interacts in vivo only with GRXS17. Can be either glutathionylated or forming covalent homodimers, depending on the oxidation state.

Its subcellular location is the cytoplasm. It localises to the nucleus. In terms of biological role, may act either alone or in interaction with glutaredoxin as a redox-regulated transcriptional regulator, or as a factor regulating Fe-S cluster biogenesis. The GRXS17-BOLA2 heterodimer binds a labile, oxygen sensitive iron-sulfur cluster. The chain is Protein BOLA2 from Arabidopsis thaliana (Mouse-ear cress).